Consider the following 243-residue polypeptide: Octanoyltransferase (243 aa).

In terms of domain architecture, BPL/LPL catalytic spans 49–227 (PLAPQAVWLL…SLSDRFGLVW (179 aa)). Substrate-binding positions include 91–98 (RGGEVTHH), 158–160 (AIG), and 171–173 (GLA). C189 serves as the catalytic Acyl-thioester intermediate.

It belongs to the LipB family.

The protein localises to the cytoplasm. The enzyme catalyses octanoyl-[ACP] + L-lysyl-[protein] = N(6)-octanoyl-L-lysyl-[protein] + holo-[ACP] + H(+). The protein operates within protein modification; protein lipoylation via endogenous pathway; protein N(6)-(lipoyl)lysine from octanoyl-[acyl-carrier-protein]: step 1/2. Catalyzes the transfer of endogenously produced octanoic acid from octanoyl-acyl-carrier-protein onto the lipoyl domains of lipoate-dependent enzymes. Lipoyl-ACP can also act as a substrate although octanoyl-ACP is likely to be the physiological substrate. The sequence is that of Octanoyltransferase from Prochlorococcus marinus (strain MIT 9313).